Here is a 178-residue protein sequence, read N- to C-terminus: MLEGQIRESISKSQAKALRNDGYLIANIYGKGQQNIHCAFKLNDFIKAMKQKTTLIFPVQVGGKTLEVVIQEYQKDPVTNTLIHVDLLLAQKGILNKYKVPVIVKGNAKGLKNKGVLFISTKRISVKCAAENLPNAYEIDVSDLDVGDSILIRDLPQFDNVNVLNRPSVAVVGVIKAK.

The protein belongs to the bacterial ribosomal protein bL25 family. CTC subfamily. Part of the 50S ribosomal subunit; part of the 5S rRNA/L5/L18/L25 subcomplex. Contacts the 5S rRNA. Binds to the 5S rRNA independently of L5 and L18.

Its function is as follows. This is one of the proteins that binds to the 5S RNA in the ribosome where it forms part of the central protuberance. This Helicobacter hepaticus (strain ATCC 51449 / 3B1) protein is Large ribosomal subunit protein bL25.